The chain runs to 259 residues: Probable iron export permease protein FetB (259 aa).

Residues 1 to 5 (MNSHN) lie on the Periplasmic side of the membrane. The chain crosses the membrane as a helical span at residues 6 to 26 (ITNESLALALMLVVVAILISH). Topologically, residues 27-35 (KEKLALEKD) are cytoplasmic. Transmembrane regions (helical) follow at residues 36 to 56 (ILWSVGRAIIQLIIVGYVLKY) and 57 to 77 (IFSVDDASLTLLMVLFICFNA). Residues 78–91 (AWNAQKRSKYIAKA) are Cytoplasmic-facing. Residues 92–112 (FISSFIAITVGAGITLAVLIL) traverse the membrane as a helical segment. Residues 113–117 (SGSIE) lie on the Periplasmic side of the membrane. The helical transmembrane segment at 118 to 138 (FIPMQVIPIAGMIAGNAMVAV) threads the bilayer. At 139 to 191 (GLCYNNLGQRVISEQQQIQEKLSLGATPKQASAILIRDSIRAALIPTVDSAKT) the chain is on the cytoplasmic side. Residues 192 to 212 (VGLVSLPGMMSGLIFAGIDPV) traverse the membrane as a helical segment. Residues 213–218 (KAIKYQ) lie on the Periplasmic side of the membrane. A helical membrane pass occupies residues 219-239 (IMVTFMLLSTASLSTIIACYL). Topologically, residues 240–259 (TYRKFYNSRHQLVVTQLKKK) are cytoplasmic.

Belongs to the UPF0014 family. In terms of assembly, the complex is composed of two ATP-binding proteins (FetA) and two transmembrane proteins (FetB).

Its subcellular location is the cell inner membrane. Part of the ABC transporter complex FetAB, which is probably involved in iron export and enhances resistance to H(2)O(2)-mediated oxidative stress. Probably responsible for the translocation of the substrate across the membrane. In Escherichia coli (strain K12), this protein is Probable iron export permease protein FetB (fetB).